Reading from the N-terminus, the 621-residue chain is UvrABC system protein C (621 aa).

The GIY-YIG domain maps to 20 to 98; sequence MAPGVYCMYA…IKSLAPRYNV (79 aa). The 36-residue stretch at 207 to 242 folds into the UVR domain; sequence DLLAEELIQAMQVASEHLEFEQAARLRDLLTSLRSM.

The protein belongs to the UvrC family. In terms of assembly, interacts with UvrB in an incision complex.

It localises to the cytoplasm. Its function is as follows. The UvrABC repair system catalyzes the recognition and processing of DNA lesions. UvrC both incises the 5' and 3' sides of the lesion. The N-terminal half is responsible for the 3' incision and the C-terminal half is responsible for the 5' incision. The chain is UvrABC system protein C from Xylella fastidiosa (strain 9a5c).